The following is a 201-amino-acid chain: Potassium-transporting ATPase KdpC subunit (201 aa).

The chain crosses the membrane as a helical span at residues 12 to 34; sequence LLALTMITGLAYPLAVTGLATVL. The disordered stretch occupies residues 73-102; sequence TVAPDPADSSKTVSAPYNAANSGGSNLGPT. Residues 81–101 are compositionally biased toward polar residues; sequence SSKTVSAPYNAANSGGSNLGP.

It belongs to the KdpC family. In terms of assembly, the system is composed of three essential subunits: KdpA, KdpB and KdpC.

The protein localises to the cell inner membrane. Functionally, part of the high-affinity ATP-driven potassium transport (or Kdp) system, which catalyzes the hydrolysis of ATP coupled with the electrogenic transport of potassium into the cytoplasm. This subunit acts as a catalytic chaperone that increases the ATP-binding affinity of the ATP-hydrolyzing subunit KdpB by the formation of a transient KdpB/KdpC/ATP ternary complex. This is Potassium-transporting ATPase KdpC subunit from Rhodopseudomonas palustris (strain ATCC BAA-98 / CGA009).